Consider the following 187-residue polypeptide: MGNEQKMIDRIIADAKQEAQEILDKAKSEADLKVNSANEKAEKEMASYTKLAEAEAEKAASKEISGAYMEAKKQILSKKQEILEEVILEAKNKLLNLKDNEYEEIILNMIEKSNCTDDSEIVLSKKDKKTLKDVLSKKGIKVSDETRDITGGFIVKKGDIEYNYSFEAIIAVEHEYIEQIAAEILFN.

Belongs to the V-ATPase E subunit family.

Produces ATP from ADP in the presence of a proton gradient across the membrane. The chain is V-type ATP synthase subunit E from Clostridioides difficile (strain 630) (Peptoclostridium difficile).